The following is a 69-amino-acid chain: DNA gyrase inhibitor YacG (69 aa).

Residues 1-28 are disordered; it reads MSGEGKKHGSNVEPLRPTRPCPECGRPS. Positions 21, 24, 36, and 40 each coordinate Zn(2+).

It belongs to the DNA gyrase inhibitor YacG family. As to quaternary structure, interacts with GyrB. Zn(2+) is required as a cofactor.

Inhibits all the catalytic activities of DNA gyrase by preventing its interaction with DNA. Acts by binding directly to the C-terminal domain of GyrB, which probably disrupts DNA binding by the gyrase. In Sinorhizobium fredii (strain NBRC 101917 / NGR234), this protein is DNA gyrase inhibitor YacG.